Reading from the N-terminus, the 517-residue chain is General transcription factor IIF subunit 1 (517 aa).

N-acetylalanine is present on Ala-2. Thr-156 carries the phosphothreonine modification. The tract at residues 178 to 458 is disordered; it reads QQRRLKDQDQ…SGDVQVTEDA (281 aa). Residues 210–225 show a composition bias toward acidic residues; the sequence is LEDDLEMSSDDSEASG. A phosphoserine mark is found at Ser-217, Ser-218, Ser-221, and Ser-224. Positions 232-251 are enriched in basic residues; the sequence is PKAKKKAPPSKGGRKKKKKK. 2 stretches are compositionally biased toward acidic residues: residues 255–270 and 303–325; these read DEAF…EGQE and EQSE…EEEE. At Thr-331 the chain carries Phosphothreonine. Positions 343–355 are enriched in acidic residues; the sequence is EESDSSEESDIDS. Residues 364-374 show a composition bias toward basic residues; sequence AKKKTPPKRER. 4 positions are modified to phosphoserine: Ser-377, Ser-380, Ser-381, and Ser-385. Residues 377–391 show a composition bias toward low complexity; that stretch reads SGGSSRGNSRPGTPS. Thr-389 carries the phosphothreonine modification. Ser-391 carries the phosphoserine modification. A compositionally biased stretch (polar residues) spans 392–401; it reads TEAGSTSSTL. Lys-407 carries the post-translational modification N6-acetyllysine. The span at 428–452 shows a compositional bias: polar residues; sequence GPQSLSGKSTPQPQSGKSTPSSGDV. Phosphoserine is present on residues Ser-431, Ser-433, and Ser-436. Phosphothreonine is present on residues Thr-437 and Thr-446. Position 449 is a phosphoserine (Ser-449).

This sequence belongs to the TFIIF alpha subunit family. Heterodimer of an alpha and a beta subunit. Interacts with GTF2F2, CTDP1, TAF6/TAFII80 and URI1. Interacts with GTF2B (via C-terminus and preferentially via acetylated form); this interaction prevents binding of GTF2B to GTF2F2. Part of TBP-based Pol II pre-initiation complex (PIC), in which Pol II core assembles with general transcription factors and other specific initiation factors including GTF2E1, GTF2E2, GTF2F1, GTF2F2, TCEA1, ERCC2, ERCC3, GTF2H2, GTF2H3, GTF2H4, GTF2H5, GTF2A1, GTF2A2, GTF2B and TBP; this large multi-subunit PIC complex mediates DNA unwinding and targets Pol II core to the transcription start site where the first phosphodiester bond forms. In terms of processing, phosphorylated on Ser and other residues by TAF1 and casein kinase II-like kinases.

The protein resides in the nucleus. Its function is as follows. TFIIF is a general transcription initiation factor that binds to RNA polymerase II and helps to recruit it to the initiation complex in collaboration with TFIIB. It promotes transcription elongation. The protein is General transcription factor IIF subunit 1 (GTF2F1) of Bos taurus (Bovine).